Consider the following 275-residue polypeptide: 4-deoxy-L-threo-5-hexosulose-uronate ketol-isomerase (275 aa).

Residues His193, His195, Glu200, and His242 each contribute to the Zn(2+) site.

This sequence belongs to the KduI family. The cofactor is Zn(2+).

It carries out the reaction 5-dehydro-4-deoxy-D-glucuronate = 3-deoxy-D-glycero-2,5-hexodiulosonate. Its pathway is glycan metabolism; pectin degradation; 2-dehydro-3-deoxy-D-gluconate from pectin: step 4/5. Catalyzes the isomerization of 5-dehydro-4-deoxy-D-glucuronate to 3-deoxy-D-glycero-2,5-hexodiulosonate. The protein is 4-deoxy-L-threo-5-hexosulose-uronate ketol-isomerase of Bacillus pumilus (strain SAFR-032).